We begin with the raw amino-acid sequence, 256 residues long: Ribonuclease 3 (256 aa).

The RNase III domain maps to 3–125 (LDALQQRLGY…IVGAVFLDAG (123 aa)). E38 provides a ligand contact to Mg(2+). D42 is an active-site residue. The Mg(2+) site is built by D111 and E114. The active site involves E114. In terms of domain architecture, DRBM spans 152–222 (DAKTLLQEYL…AKLALDEVQK (71 aa)). Positions 229–256 (KRSRAERTGKTRKQPQPQDPQLSLRLKE) are disordered.

This sequence belongs to the ribonuclease III family. As to quaternary structure, homodimer. Requires Mg(2+) as cofactor.

The protein localises to the cytoplasm. It catalyses the reaction Endonucleolytic cleavage to 5'-phosphomonoester.. Functionally, digests double-stranded RNA. Involved in the processing of primary rRNA transcript to yield the immediate precursors to the large and small rRNAs (23S and 16S). Processes some mRNAs, and tRNAs when they are encoded in the rRNA operon. Processes pre-crRNA and tracrRNA of type II CRISPR loci if present in the organism. The protein is Ribonuclease 3 of Cupriavidus taiwanensis (strain DSM 17343 / BCRC 17206 / CCUG 44338 / CIP 107171 / LMG 19424 / R1) (Ralstonia taiwanensis (strain LMG 19424)).